We begin with the raw amino-acid sequence, 901 residues long: MDHVPALVLAGCCFLALLPGWACGLGSMSSIAVSYGEDGPVFCGLNSDGSHLVACFGADASVLYGAPPNIPFLGLTAGDGFVCGLLLDTRQPYCWGSNSYVKSGVPQPMVEGARYSELSAGDNHLCALRAAQDGGRGSSAATSLIDCWGYNMTATHAVDEAVSTVSAGSVFNCGLFARNRTVFCWGDETVSGVVGLAPRDLHFQSIGAGGYHVCGVLENAQVFCWGRSLEMQQVVPSSAIGDGDVNIVPMDAMSTVVGGRFHACGIRSLDHQVACWGFTLHNSTSPPKGLKMYALVAGDYFTCGVPAETSLMPRCWGNSGPLALPMAVPPGICVPTACSHGYYEYVNHGEVGSIKVCKPANSRLCLPCSTGCPEGLYESSPCNATADRVCQFDCLKCVTDECLSFCLSQKRTKSRKLMAFQMRIFVAEIVFAVVLVLSVSVTTCLYVRHKLRHCQCSNRELRLAKSTAYSFRKDNMKIQPDMEDLKIRRAQEFSYEELEQATGGFSEDSQVGKGSFSCVFKGILRDGTVVAVKRAIKASDVKKSSKEFHNELDLLSRLNHAHLLNLLGYCEDGSERLLVYEFMAHGSLYQHLHGKDPNLKKRLNWARRVTIAVQAARGIEYLHGYACPPVIHRDIKSSNILIDEDHNARVADFGLSILGPADSGTPLSELPAGTLGYLDPEYYRLHYLTTKSDVYSFGVVLLEILSGRKAIDMQFEEGNIVEWAVPLIKAGDIFAILDPVLSPPSDLEALKKIASVACKCVRMRGKDRPSMDKVTTALEHALALLMGSPCIEQPILPTEVVLGSSRMHKVSQMSSNHSCSENELADGEDQGIGYRAPSWITFPSVTSSQRRKSSASEADIVGRRATDGRNVGSSIGDGLRSLEEEIAPASPQENLYLQHNF.

The signal sequence occupies residues 1–24 (MDHVPALVLAGCCFLALLPGWACG). Residues 25–423 (LGSMSSIAVS…SRKLMAFQMR (399 aa)) are Extracellular-facing. A run of 7 repeats spans residues 33 to 68 (VSYG…GAPP), 72 to 107 (FLGL…GVPQ), 125 to 160 (LCAL…AVDE), 162 to 195 (VSTV…GVVG), 203 to 236 (FQSI…QVVP), 253 to 287 (MSTV…TSPP), and 292 to 330 (MYAL…AVPP). The segment at 33 to 330 (VSYGEDGPVF…PLALPMAVPP (298 aa)) is 7 X 36 AA repeats. N-linked (GlcNAc...) asparagine glycans are attached at residues asparagine 151 and asparagine 179. The N-linked (GlcNAc...) asparagine glycan is linked to asparagine 282. 3 disulfides stabilise this stretch: cysteine 338/cysteine 365, cysteine 368/cysteine 382, and cysteine 372/cysteine 390. The TNFR-Cys repeat unit spans residues 357 to 391 (CKPANSRLCLPCSTGCPEGLYESSPCNATADRVCQ). Residue asparagine 383 is glycosylated (N-linked (GlcNAc...) asparagine). The helical transmembrane segment at 424 to 444 (IFVAEIVFAVVLVLSVSVTTC) threads the bilayer. Topologically, residues 445-901 (LYVRHKLRHC…QENLYLQHNF (457 aa)) are cytoplasmic. The 208-residue stretch at 505-712 (FSEDSQVGKG…EILSGRKAID (208 aa)) folds into the Protein kinase domain. Residues 511 to 519 (VGKGSFSCV) and lysine 533 contribute to the ATP site. Catalysis depends on aspartate 634, which acts as the Proton acceptor. A disordered region spans residues 845–876 (VTSSQRRKSSASEADIVGRRATDGRNVGSSIG).

The protein belongs to the protein kinase superfamily. Ser/Thr protein kinase family. As to quaternary structure, homodimer.

It is found in the cell membrane. The protein resides in the endosome. Its subcellular location is the multivesicular body membrane. The enzyme catalyses L-seryl-[protein] + ATP = O-phospho-L-seryl-[protein] + ADP + H(+). It catalyses the reaction L-threonyl-[protein] + ATP = O-phospho-L-threonyl-[protein] + ADP + H(+). In terms of biological role, putative receptor protein kinase. Could play a role in a differentiation signal. The CRINKLY4 (CR4) mutation affects leaf epidermis differentiation such that cell size and morphology are altered, and surface functions are compromised, allowing graft-like fusions between organs. The protein is Putative receptor protein kinase CRINKLY4 (CR4) of Zea mays (Maize).